Here is a 515-residue protein sequence, read N- to C-terminus: MATTLNPSEISDLIKTRIEAVKLSAESRNEGSVTSVSDGIVRIFGLADVMQGEMIELPNNTFALALNLERDSVGAVVLGDYENLREGDVAKTTGRILEVPVGPELLGRVVNALGEPIDGKGPLGATQTAPVERVAPGVIWRKSVDQPVQTGYKSVDAMIPIGRGQRELVIGDRQTGKTALAIDAVINQKGTGIKCVYVAIGQKASTVANIVRKLEENGALAHTVVVAATASESAAMQYISPYAGCTMGEYFMDRGEDALIVYDDLSKQAVAYRQISLLLKRPPGREAYPGDVFYLHSRLLERAARVSEEYVEKFTNGAVTGKTGSLTALPIIETQAGDVSAFVPTNVISITDGQIFLETDLFNAGIRPAVNAGISVSRVGGAAQTKIIKKLSGGIRISLAQYRELAAFAQFASDLDEATRKQLERGQRVTELMKQKQYAPMSIANQALSIYAVNEGYLDEVPVNKLLAFEEGLHAHFANTQGELVSKINTTGGWDNDIEAAFKKGIEEFKTTGSW.

Position 171–178 (171–178 (GDRQTGKT)) interacts with ATP.

This sequence belongs to the ATPase alpha/beta chains family. In terms of assembly, F-type ATPases have 2 components, CF(1) - the catalytic core - and CF(0) - the membrane proton channel. CF(1) has five subunits: alpha(3), beta(3), gamma(1), delta(1), epsilon(1). CF(0) has three main subunits: a(1), b(2) and c(9-12). The alpha and beta chains form an alternating ring which encloses part of the gamma chain. CF(1) is attached to CF(0) by a central stalk formed by the gamma and epsilon chains, while a peripheral stalk is formed by the delta and b chains.

Its subcellular location is the cell inner membrane. The catalysed reaction is ATP + H2O + 4 H(+)(in) = ADP + phosphate + 5 H(+)(out). Produces ATP from ADP in the presence of a proton gradient across the membrane. The alpha chain is a regulatory subunit. This is ATP synthase subunit alpha from Xanthomonas campestris pv. campestris (strain 8004).